Here is a 1172-residue protein sequence, read N- to C-terminus: Protein diaphanous homolog 3 (1172 aa).

The span at 1–15 shows a compositional bias: basic and acidic residues; that stretch reads MEKHRARALGRDSKA. The interval 1–36 is disordered; that stretch reads MEKHRARALGRDSKASRRKGLPSAPPAGPYELGEKR. Positions 16–39 match the Nuclear localization signal motif; the sequence is SRRKGLPSAPPAGPYELGEKRPKL. Threonine 47 is subject to Phosphothreonine. The residue at position 56 (serine 56) is a Phosphoserine. The tract at residues 57-96 is disordered; sequence IRIPKGSKKERPPLPQLKTVSGSSDYSSVSSETMENNPKS. The segment covering 77-87 has biased composition (low complexity); sequence SGSSDYSSVSS. Residues 94-456 enclose the GBD/FH3 domain; the sequence is PKSLSENEVL…QIVLHRDGID (363 aa). The residue at position 155 (serine 155) is a Phosphoserine. The stretch at 493 to 530 forms a coiled coil; sequence CKKFEKECTDHQETQAQLQKKEAKINELQAELQAFKSQ. Positions 535-586 are disordered; the sequence is PPGTKIPLQTSAKGEPGPSAFPPAPPALGAGVPPPPPPPPPPPPPLPGMAMP. The region spanning 541–611 is the FH1 domain; that stretch reads PLQTSAKGEP…GQNFIPLNLP (71 aa). A compositionally biased stretch (pro residues) spans 553–581; the sequence is SAFPPAPPALGAGVPPPPPPPPPPPPPLP. The FH2 domain maps to 616-1014; it reads PKKEFKPEIS…EKRARIAKER (399 aa). The region spanning 1037–1067 is the DAD domain; sequence DETGVMDSLLEALQSGAAFRDRRKRTPKLKD. A phosphoserine mark is found at serine 1073 and serine 1158. A Nuclear export signal motif is present at residues 1163–1172; it reads EALLARLRAL.

Belongs to the formin homology family. Diaphanous subfamily. Post-translationally, ubiquitinated. In terms of tissue distribution, expressed in testis. Present in Sertoli cells (at protein level).

It is found in the cytoplasm. It localises to the nucleus. In terms of biological role, actin nucleation and elongation factor required for the assembly of F-actin structures, such as actin cables and stress fibers. Required for cytokinesis, stress fiber formation and transcriptional activation of the serum response factor. Binds to GTP-bound form of Rho and to profilin: acts in a Rho-dependent manner to recruit profilin to the membrane, where it promotes actin polymerization. DFR proteins couple Rho and Src tyrosine kinase during signaling and the regulation of actin dynamics. Also acts as an actin nucleation and elongation factor in the nucleus by promoting nuclear actin polymerization inside the nucleus to drive serum-dependent SRF-MRTFA activity. This Rattus norvegicus (Rat) protein is Protein diaphanous homolog 3.